Reading from the N-terminus, the 1140-residue chain is Probable DNA-directed RNA polymerase II subunit RPB2 homolog (1140 aa).

Residue D773 coordinates Mg(2+). Zn(2+)-binding residues include C1092, C1095, C1105, and C1108. The C4-type zinc-finger motif lies at 1092–1108 (CKDCGMMSSTSKKCHHC).

It belongs to the RNA polymerase beta chain family.

The catalysed reaction is RNA(n) + a ribonucleoside 5'-triphosphate = RNA(n+1) + diphosphate. In terms of biological role, component of the DNA-dependent RNA polymerase that catalyzes the transcription of DNA into RNA using the four ribonucleoside triphosphates as substrates. Second largest component of RNA polymerase II which synthesizes mRNA precursors and many functional non-coding RNAs. Proposed to contribute to the polymerase catalytic activity and forms the polymerase active center together with the largest subunit. The chain is Probable DNA-directed RNA polymerase II subunit RPB2 homolog from Invertebrate iridescent virus 3 (IIV-3).